A 215-amino-acid polypeptide reads, in one-letter code: Small ribosomal subunit protein uS7 (215 aa).

The protein belongs to the universal ribosomal protein uS7 family. Part of the 30S ribosomal subunit.

Functionally, one of the primary rRNA binding proteins, it binds directly to 16S rRNA where it nucleates assembly of the head domain of the 30S subunit. Is located at the subunit interface close to the decoding center. This chain is Small ribosomal subunit protein uS7, found in Pyrococcus abyssi (strain GE5 / Orsay).